A 122-amino-acid chain; its full sequence is UPF0145 protein BceJ2315_57450 (122 aa).

The protein belongs to the UPF0145 family.

This Burkholderia cenocepacia (strain ATCC BAA-245 / DSM 16553 / LMG 16656 / NCTC 13227 / J2315 / CF5610) (Burkholderia cepacia (strain J2315)) protein is UPF0145 protein BceJ2315_57450.